The chain runs to 597 residues: NADH-quinone oxidoreductase subunit C/D (597 aa).

Positions 1–188 (MKKEIKRDDV…DPYVLNKYKE (188 aa)) are NADH dehydrogenase I subunit C. Residues 211-597 (KYMFLNLGPN…IDFVMSDVDR (387 aa)) form an NADH dehydrogenase I subunit D region.

This sequence in the N-terminal section; belongs to the complex I 30 kDa subunit family. It in the C-terminal section; belongs to the complex I 49 kDa subunit family. In terms of assembly, NDH-1 is composed of 13 different subunits. Subunits NuoB, CD, E, F, and G constitute the peripheral sector of the complex.

It localises to the cell inner membrane. The enzyme catalyses a quinone + NADH + 5 H(+)(in) = a quinol + NAD(+) + 4 H(+)(out). NDH-1 shuttles electrons from NADH, via FMN and iron-sulfur (Fe-S) centers, to quinones in the respiratory chain. The immediate electron acceptor for the enzyme in this species is believed to be ubiquinone. Couples the redox reaction to proton translocation (for every two electrons transferred, four hydrogen ions are translocated across the cytoplasmic membrane), and thus conserves the redox energy in a proton gradient. The sequence is that of NADH-quinone oxidoreductase subunit C/D from Buchnera aphidicola subsp. Baizongia pistaciae (strain Bp).